Consider the following 300-residue polypeptide: 4-diphosphocytidyl-2-C-methyl-D-erythritol kinase (300 aa).

K17 is an active-site residue. 102-112 lines the ATP pocket; it reads PVAAGIGGGSA. D144 is an active-site residue.

The protein belongs to the GHMP kinase family. IspE subfamily.

It catalyses the reaction 4-CDP-2-C-methyl-D-erythritol + ATP = 4-CDP-2-C-methyl-D-erythritol 2-phosphate + ADP + H(+). It participates in isoprenoid biosynthesis; isopentenyl diphosphate biosynthesis via DXP pathway; isopentenyl diphosphate from 1-deoxy-D-xylulose 5-phosphate: step 3/6. In terms of biological role, catalyzes the phosphorylation of the position 2 hydroxy group of 4-diphosphocytidyl-2C-methyl-D-erythritol. In Bradyrhizobium sp. (strain ORS 278), this protein is 4-diphosphocytidyl-2-C-methyl-D-erythritol kinase.